The primary structure comprises 361 residues: UDP-3-O-acylglucosamine N-acyltransferase (361 aa).

Catalysis depends on His-253, which acts as the Proton acceptor.

Belongs to the transferase hexapeptide repeat family. LpxD subfamily. Homotrimer.

The catalysed reaction is a UDP-3-O-[(3R)-3-hydroxyacyl]-alpha-D-glucosamine + a (3R)-hydroxyacyl-[ACP] = a UDP-2-N,3-O-bis[(3R)-3-hydroxyacyl]-alpha-D-glucosamine + holo-[ACP] + H(+). It participates in bacterial outer membrane biogenesis; LPS lipid A biosynthesis. In terms of biological role, catalyzes the N-acylation of UDP-3-O-acylglucosamine using 3-hydroxyacyl-ACP as the acyl donor. Is involved in the biosynthesis of lipid A, a phosphorylated glycolipid that anchors the lipopolysaccharide to the outer membrane of the cell. In Burkholderia mallei (strain ATCC 23344), this protein is UDP-3-O-acylglucosamine N-acyltransferase.